We begin with the raw amino-acid sequence, 111 residues long: MKGRQGERVRLYVRGTVLGYKRSKSNQYPNTSLVQIEGVNTQEEVNWYKGKRLAYIYKAKTKKNGSHYRCIWGKVTRPHGNSGVVRSKFTSNLPPKSMGARVRVFMYPSNI.

It belongs to the eukaryotic ribosomal protein eL33 family.

The polypeptide is Large ribosomal subunit protein eL33x (RPL35AD) (Arabidopsis thaliana (Mouse-ear cress)).